A 79-amino-acid chain; its full sequence is UPF0349 protein BCE_5075 (79 aa).

Belongs to the UPF0349 family.

The protein is UPF0349 protein BCE_5075 of Bacillus cereus (strain ATCC 10987 / NRS 248).